Here is a 483-residue protein sequence, read N- to C-terminus: PAT complex subunit CCDC47 (483 aa).

The first 20 residues, 1-20 (MKAFHTFCVVLLVFGSVSEA), serve as a signal peptide directing secretion. Residues 21 to 135 (KFDDFEDEED…PAHLQNSWES (115 aa)) lie on the Cytoplasmic side of the membrane. The interval 46-118 (MEDSVTESPQ…PDTSSSKNKD (73 aa)) is disordered. Acidic residues predominate over residues 60–104 (TEDDEDETTVELEGQDENQEGDFEDADTQEGDTESEPYDDEEFEG). Basic and acidic residues predominate over residues 105–118 (YEDKPDTSSSKNKD). Residues 136-155 (YYLEILMVTGLLAYIMNYII) form a helical membrane-spanning segment. Topologically, residues 156–483 (GKNKNSRLAQ…KMKQIKVKAM (328 aa)) are lumenal. N178 carries N-linked (GlcNAc...) asparagine glycosylation. A disordered region spans residues 424 to 483 (QRQEAAQSRREEKKRAEKERIMNEEDPEKQRRLEEAALRREQKKLEKKQMKMKQIKVKAM). A compositionally biased stretch (basic and acidic residues) spans 430–472 (QSRREEKKRAEKERIMNEEDPEKQRRLEEAALRREQKKLEKKQ). A coiled-coil region spans residues 450–483 (PEKQRRLEEAALRREQKKLEKKQMKMKQIKVKAM). Residues 473-483 (MKMKQIKVKAM) are compositionally biased toward basic residues.

Belongs to the CCDC47 family. In terms of assembly, component of the PAT complex, composed of WDR83OS/Asterix and CCDC47. The PAT complex is part of the multi-pass translocon (MPT) complex, composed of three subcomplexes, the GEL complex (composed of RAB5IF/OPTI and TMCO1), the BOS complex (composed of NCLN/Nicalin, NOMO and TMEM147) and the PAT complex (composed of WDR83OS/Asterix and CCDC47). The MPT complex associates with the SEC61 complex. Interacts with VCP, HSPA5, DERL1, DERL2 and SELENOS.

Its subcellular location is the endoplasmic reticulum membrane. It localises to the rough endoplasmic reticulum membrane. In terms of biological role, component of the multi-pass translocon (MPT) complex that mediates insertion of multi-pass membrane proteins into the lipid bilayer of membranes. The MPT complex takes over after the SEC61 complex: following membrane insertion of the first few transmembrane segments of proteins by the SEC61 complex, the MPT complex occludes the lateral gate of the SEC61 complex to promote insertion of subsequent transmembrane regions. Within the MPT complex, the PAT subcomplex sequesters any highly polar regions in the transmembrane domains away from the non-polar membrane environment until they can be buried in the interior of the fully assembled protein. Within the PAT subcomplex, CCDC47 occludes the lateral gate of the SEC61 complex. Involved in the regulation of calcium ion homeostasis in the ER. Required for proper protein degradation via the ERAD (ER-associated degradation) pathway. Has an essential role in the maintenance of ER organization during embryogenesis. This is PAT complex subunit CCDC47 from Homo sapiens (Human).